Reading from the N-terminus, the 283-residue chain is Formamidopyrimidine-DNA glycosylase (283 aa).

Proline 2 functions as the Schiff-base intermediate with DNA in the catalytic mechanism. Glutamate 3 acts as the Proton donor in catalysis. Lysine 58 serves as the catalytic Proton donor; for beta-elimination activity. Residues histidine 100, arginine 119, and lysine 162 each coordinate DNA. Residues 247–283 (RVYGREGQRCQTPDCAEKILRKVQSGRSSFYCPACQR) form an FPG-type zinc finger. The active-site Proton donor; for delta-elimination activity is arginine 273.

This sequence belongs to the FPG family. Monomer. The cofactor is Zn(2+).

It carries out the reaction Hydrolysis of DNA containing ring-opened 7-methylguanine residues, releasing 2,6-diamino-4-hydroxy-5-(N-methyl)formamidopyrimidine.. The enzyme catalyses 2'-deoxyribonucleotide-(2'-deoxyribose 5'-phosphate)-2'-deoxyribonucleotide-DNA = a 3'-end 2'-deoxyribonucleotide-(2,3-dehydro-2,3-deoxyribose 5'-phosphate)-DNA + a 5'-end 5'-phospho-2'-deoxyribonucleoside-DNA + H(+). Involved in base excision repair of DNA damaged by oxidation or by mutagenic agents. Acts as a DNA glycosylase that recognizes and removes damaged bases. Has a preference for oxidized purines, such as 7,8-dihydro-8-oxoguanine (8-oxoG). Has AP (apurinic/apyrimidinic) lyase activity and introduces nicks in the DNA strand. Cleaves the DNA backbone by beta-delta elimination to generate a single-strand break at the site of the removed base with both 3'- and 5'-phosphates. The chain is Formamidopyrimidine-DNA glycosylase from Jannaschia sp. (strain CCS1).